A 64-amino-acid chain; its full sequence is Mitotic-spindle organizing protein 1 (64 aa).

Belongs to the MOZART1 family. Part of the gamma-tubulin complex. Interacts directly with alp6/GPC3.

The protein resides in the cytoplasm. It is found in the cytoskeleton. The protein localises to the microtubule organizing center. Its subcellular location is the spindle pole body. Its function is as follows. Required for gamma-tubulin complex recruitment to the microtubule organizing center (MTOC). The chain is Mitotic-spindle organizing protein 1 (mzt1) from Schizosaccharomyces pombe (strain 972 / ATCC 24843) (Fission yeast).